We begin with the raw amino-acid sequence, 195 residues long: Phosphoheptose isomerase (195 aa).

Residues 36 to 195 (LVDSLKGDGI…IIEKELFGLD (160 aa)) enclose the SIS domain. 51–53 (NGG) contributes to the substrate binding site. Positions 60 and 64 each coordinate Zn(2+). Residues Glu-64, 95–96 (ND), 121–123 (TTS), Ser-126, and Gln-173 each bind substrate. Gln-173 and His-181 together coordinate Zn(2+).

This sequence belongs to the SIS family. GmhA subfamily. Requires Zn(2+) as cofactor.

It is found in the cytoplasm. It carries out the reaction 2 D-sedoheptulose 7-phosphate = D-glycero-alpha-D-manno-heptose 7-phosphate + D-glycero-beta-D-manno-heptose 7-phosphate. It participates in carbohydrate biosynthesis; D-glycero-D-manno-heptose 7-phosphate biosynthesis; D-glycero-alpha-D-manno-heptose 7-phosphate and D-glycero-beta-D-manno-heptose 7-phosphate from sedoheptulose 7-phosphate: step 1/1. Its function is as follows. Catalyzes the isomerization of sedoheptulose 7-phosphate in D-glycero-D-manno-heptose 7-phosphate. In Leptospira biflexa serovar Patoc (strain Patoc 1 / Ames), this protein is Phosphoheptose isomerase.